We begin with the raw amino-acid sequence, 909 residues long: MQKCAGHAPLVTAASRVSQDTVDALLQAILKAYHKLASIDSHINDPVEIAFKLINSFKYLPISGSSVKDFESELRELDVFSPLLQSAVTAANNSNIIWDLIAVLFAYISIHKQLHPLILHNLNIWKDFMADNDEETATTTDGDSMNFGVLSLLSIVQNFEEITPNLFEFLKLGLRSTLLKIWVAQWQRYDPSATNLINGDEKISSWITKDYQVDFFIITSLASTSSLEVLPSHYFVYKISKRISHFPNLIDPKLYRSAISTIMENGISDNGGGENSSDKIDPTDLSFHLQVLMEVIDHPELNYLQENRLILLLDIALNYLILVPTHCLHSNFGELGSTQSLASTLNIIQFLLSKFLINMGSISQLINQYNRKCITTNNINNNNINNNGVINGSTNTTSTTTTTITNNNNNSNNSSISNNNRKIDWTQSYQTRYQIPYWFEDSILPPIPPISKSLFTFDKNLDHESDSIMIVNDVLRCLNLTILLISKLLRDYDDLKINPLIQSSDDHSNEDNHVIIEQYMQLYLVPLFTSLLLAQQLKDRGQERDEGHKEKEENINLIGSSSVKKLFSQLIFFSSLKLCENLVIKEKNLALYHLIKFATKVSLDDLILQKISINLLNHLFFHQIRDGSDDDNLIKKLCLKNQLSFQALKDYITLWNDGSEVYNAFYKELFYEEQPKIKPIKLTTSDLLKLFPEDVQFVISTPPNTITSASTSDNCTSSQSAAQKNIENFTTLSKYDVYSSTSFIPSTSKNTNTNVSKQQQQPQNSTPCSSNRFLFNKSSLISQESNGSNNNSGTQGPGSMNESYSLDNSFNTTNTNMTRQPTTLTRATDAMTTAPTTPIPYKNTSGSSNNNLWIESPMTNFKGSTISKSTNKSKMVNTGKNYILGGHNKVKNNSRAQSIHIDDFENENN.

The span at 746–784 (STSKNTNTNVSKQQQQPQNSTPCSSNRFLFNKSSLISQE) shows a compositional bias: polar residues. Residues 746-824 (STSKNTNTNV…TNMTRQPTTL (79 aa)) form a disordered region. Residues 785–799 (SNGSNNNSGTQGPGS) show a composition bias toward low complexity. The segment covering 800 to 810 (MNESYSLDNSF) has biased composition (polar residues). The segment covering 811–824 (NTTNTNMTRQPTTL) has biased composition (low complexity). 2 positions are modified to phosphoserine: Ser856 and Ser898.

Belongs to the vir family. Component of the MIS (mRNA N6-methyladenosine (m6A) methylation) complex, at least composed of IME4, KAR4, MUM2, SLZ1, and VIR1. Interacts with KAR4. Interacts with SLZ1. Interacts with MUM2. Interacts with IME4.

The protein resides in the cytoplasm. The protein localises to the nucleus. It is found in the nucleolus. Component of the MIS complex, a complex that mediates N6-methyladenosine (m6A) methylation of meiotic mRNAs and is required for initiation of meiosis, progression through the meiotic divisions and sporulation. In the complex, performs a scaffolding role stabilizing the other complex members. This chain is Protein virilizer, found in Saccharomyces cerevisiae (strain ATCC 204508 / S288c) (Baker's yeast).